A 209-amino-acid chain; its full sequence is Uracil phosphoribosyltransferase (209 aa).

Residues R79, R104, and 131 to 139 contribute to the 5-phospho-alpha-D-ribose 1-diphosphate site; that span reads DPMLATGNS. Uracil-binding positions include I194 and 199-201; that span reads GDA. D200 is a binding site for 5-phospho-alpha-D-ribose 1-diphosphate.

This sequence belongs to the UPRTase family. Mg(2+) is required as a cofactor.

It carries out the reaction UMP + diphosphate = 5-phospho-alpha-D-ribose 1-diphosphate + uracil. It participates in pyrimidine metabolism; UMP biosynthesis via salvage pathway; UMP from uracil: step 1/1. With respect to regulation, allosterically activated by GTP. In terms of biological role, catalyzes the conversion of uracil and 5-phospho-alpha-D-ribose 1-diphosphate (PRPP) to UMP and diphosphate. This chain is Uracil phosphoribosyltransferase, found in Sinorhizobium fredii (strain NBRC 101917 / NGR234).